The primary structure comprises 341 residues: UDP-glucuronic acid decarboxylase 5 (341 aa).

The disordered stretch occupies residues 1-21; it reads MASSDKQTSPKPPPSPSPLRN. 60–85 is an NAD(+) binding site; the sequence is DNYFTGSKDNLKKWIGHPRFELIRHD. Substrate is bound at residue Arg169. Residue Tyr172 is the Proton acceptor of the active site. 172-176 serves as a coordination point for NAD(+); the sequence is YDEGK. Position 201 (Asn201) interacts with substrate. An NAD(+)-binding site is contributed by Arg213. Residues 214-218, 231-238, and 298-302 each bind substrate; these read VVSNF, QKPGTQTR, and DPRQR.

The protein belongs to the NAD(P)-dependent epimerase/dehydratase family. UDP-glucuronic acid decarboxylase subfamily. Requires NAD(+) as cofactor.

It is found in the cytoplasm. It catalyses the reaction UDP-alpha-D-glucuronate + H(+) = UDP-alpha-D-xylose + CO2. The protein operates within nucleotide-sugar biosynthesis; UDP-alpha-D-xylose biosynthesis; UDP-alpha-D-xylose from UDP-alpha-D-glucuronate: step 1/1. Catalyzes the NAD-dependent decarboxylation of UDP-glucuronic acid to UDP-xylose. Necessary for the biosynthesis of the core tetrasaccharide in glycosaminoglycan biosynthesis. This chain is UDP-glucuronic acid decarboxylase 5 (UXS5), found in Arabidopsis thaliana (Mouse-ear cress).